A 462-amino-acid polypeptide reads, in one-letter code: N-myc proto-oncogene protein (462 aa).

Positions Leu-19–Glu-47 are interaction with AURKA. The segment at Leu-61 to Gly-90 is interaction with AURKA and FBXW7. The 9aaTAD motif lies at Asn-76–Glu-85. 3 disordered regions span residues Lys-134–Pro-177, Ala-232–Asn-289, and Ala-332–Gln-390. Low complexity-rich tracts occupy residues Gly-143 to Leu-176 and Ala-232 to Ser-244. Acidic residues predominate over residues Thr-257–Asp-276. Phosphoserine; by CK2 occurs at positions 259 and 261. Residues Glu-379–Leu-431 form the bHLH domain. The segment at Leu-431–Leu-452 is leucine-zipper.

Efficient DNA binding requires dimerization with another bHLH protein. Binds DNA as a heterodimer with MAX. Interacts with KDM5A, KDM5B and HUWE1. Interacts with MYCNOS. Interacts with AURKA; interaction is phospho-independent and triggers AURKA activation; AURKA competes with FBXW7 for binding to unphosphorylated MYCN but not for binding to unphosphorylated MYCN. Interacts with FBXW7; FBXW7 competes with AURKA for binding to unphosphorylated MYCN but not for binding to phosphorylated MYCN. In terms of processing, phosphorylated by GSK3-beta which may promote its degradation. Phosphorylated by AURKA.

Its subcellular location is the nucleus. In terms of biological role, positively regulates the transcription of MYCNOS in neuroblastoma cells. This chain is N-myc proto-oncogene protein (Mycn), found in Mus musculus (Mouse).